A 461-amino-acid polypeptide reads, in one-letter code: Phosphatidate cytidylyltransferase 1 (461 aa).

Positions 1–68 (MLELRHRGGC…PEVPPSSDRT (68 aa)) are disordered. Arg-7 is modified (omega-N-methylarginine). Over residues 22 to 56 (REGEAAGGDHETESTSDKETDIDDRYGDLDARGDS) the composition is skewed to basic and acidic residues. Phosphoserine occurs at positions 35 and 37. The next 6 membrane-spanning stretches (helical) occupy residues 96–116 (MISL…LLVL), 149–169 (FLLC…FATF), 183–203 (HRFI…LSLV), 230–250 (LVIQ…SSVI), 279–299 (GFIG…YVLS), and 357–377 (IALS…ASGF).

Belongs to the CDS family. As to quaternary structure, homodimer. Interacts with FOS; this interaction may enhance catalytic activity. Mg(2+) is required as a cofactor. In terms of tissue distribution, brain, retina and testis. Found in cerebellar Purkinje cells, pineal body, inner segment of photoreceptor cells and postmitotic spermatocytes and spermatids.

The protein resides in the endoplasmic reticulum membrane. The catalysed reaction is a 1,2-diacyl-sn-glycero-3-phosphate + CTP + H(+) = a CDP-1,2-diacyl-sn-glycerol + diphosphate. It catalyses the reaction 1-octadecanoyl-2-(5Z,8Z,11Z,14Z-eicosatetraenoyl)-sn-glycero-3-phosphate + CTP + H(+) = 1-octadecanoyl-2-(5Z,8Z,11Z,14Z-eicosatetraenoyl)-sn-glycero-3-cytidine-5'-diphosphate + diphosphate. The enzyme catalyses 1-octadecanoyl-2-(9Z,12Z-octadecadienoyl)-sn-glycero-3-phosphate + CTP + H(+) = 1-octadecanoyl-2-(9Z,12Z-octadecadienoyl)-sn-glycero-3-cytidine-5'-diphosphate + diphosphate. It carries out the reaction 1-hexadecanoyl-2-(5Z,8Z,11Z,14Z-eicosatetraenoyl)-sn-glycero-3-phosphate + CTP + H(+) = 1-hexadecanoyl-2-(5Z,8Z,11Z,14Z-eicosatetraenoyl)-sn-glycero-3-cytidine-5'-diphosphate + diphosphate. The catalysed reaction is 1,2-di-(5Z,8Z,11Z,14Z)-eicosatetraenoyl-sn-glycero-3-phosphate + CTP + H(+) = 1,2-di-(5Z,8Z,11Z,14Z-eicosatetraenoyl)-sn-glycero-3-cytidine-5'-diphosphate + diphosphate. It catalyses the reaction 1-octadecanoyl-2-(9Z-octadecenoyl)-sn-glycero-3-phosphate + CTP + H(+) = 1-octadecanoyl-2-(9Z-octadecenoyl)-sn-glycero-3-cytidine-5'-diphosphate + diphosphate. The enzyme catalyses 1-octadecanoyl-2-(4Z,7Z,10Z,13Z,16Z,19Z-docosahexaenoyl)-sn-glycero-3-phosphate + CTP + H(+) = 1-octadecanoyl-2-(4Z,7Z,10Z,13Z,16Z,19Z-docosahexaenoyl)-sn-glycero-3-cytidine-5'-diphosphate + diphosphate. It carries out the reaction 1,2-di-(9Z,12Z-octadecadienoyl)-sn-glycero-3-phosphate + CTP + H(+) = 1,2-di-(9Z,12Z-octadecadienoyl)-sn-glycero-3-cytidine-5'-diphosphate + diphosphate. The catalysed reaction is 1,2-di-(9Z-octadecenoyl)-sn-glycero-3-phosphate + CTP + H(+) = 1,2-di-(9Z-octadecenoyl)-sn-glycero-3-cytidine-5'-diphosphate + diphosphate. The protein operates within phospholipid metabolism; CDP-diacylglycerol biosynthesis; CDP-diacylglycerol from sn-glycerol 3-phosphate: step 3/3. Activated by GTP. Inhibited by CDP-diacylglycerol and by phosphatidylglycerol 4,5-bisphosphate (PPI2). Its function is as follows. Catalyzes the conversion of phosphatidic acid (PA) to CDP-diacylglycerol (CDP-DAG), an essential intermediate in the synthesis of phosphatidylglycerol, cardiolipin and phosphatidylinositol. Exhibits almost no acyl chain preference for PA, showing no discrimination for the sn-1/sn-2 acyl chain composition of PAs. Plays an important role in regulatinng the growth of lipid droplets which are storage organelles at the center of lipid and energy homeostasis. Positively regulates the differentiation and development of adipocytes. This Rattus norvegicus (Rat) protein is Phosphatidate cytidylyltransferase 1.